The sequence spans 852 residues: Bifunctional uridylyltransferase/uridylyl-removing enzyme (852 aa).

Residues 1-318 (MPANLSSALE…STPLRVTLRI (318 aa)) are uridylyltransferase. Positions 319 to 672 (DDDYIQVNNQ…SRILPKSDSF (354 aa)) are uridylyl-removing. The HD domain maps to 436–558 (VDDHILTVVR…VQTHERLSAL (123 aa)). ACT domains are found at residues 673–757 (QVMV…SRSR) and 785–852 (SVEI…EQLS).

This sequence belongs to the GlnD family. Mg(2+) serves as cofactor.

It catalyses the reaction [protein-PII]-L-tyrosine + UTP = [protein-PII]-uridylyl-L-tyrosine + diphosphate. The catalysed reaction is [protein-PII]-uridylyl-L-tyrosine + H2O = [protein-PII]-L-tyrosine + UMP + H(+). Its activity is regulated as follows. Uridylyltransferase (UTase) activity is inhibited by glutamine, while glutamine activates uridylyl-removing (UR) activity. Modifies, by uridylylation and deuridylylation, the PII regulatory proteins (GlnB and homologs), in response to the nitrogen status of the cell that GlnD senses through the glutamine level. Under low glutamine levels, catalyzes the conversion of the PII proteins and UTP to PII-UMP and PPi, while under higher glutamine levels, GlnD hydrolyzes PII-UMP to PII and UMP (deuridylylation). Thus, controls uridylylation state and activity of the PII proteins, and plays an important role in the regulation of nitrogen assimilation and metabolism. The protein is Bifunctional uridylyltransferase/uridylyl-removing enzyme of Neisseria meningitidis serogroup B (strain ATCC BAA-335 / MC58).